We begin with the raw amino-acid sequence, 326 residues long: ATP-dependent 6-phosphofructokinase (326 aa).

Glycine 12 provides a ligand contact to ATP. 22 to 26 (RAIIK) provides a ligand contact to ADP. Residues 73–74 (RF) and 103–106 (GDGS) each bind ATP. Residue aspartate 104 participates in Mg(2+) binding. Residue 126 to 128 (TID) participates in substrate binding. Aspartate 128 serves as the catalytic Proton acceptor. Arginine 155 contacts ADP. Residues arginine 163 and 170–172 (MGH) each bind substrate. ADP contacts are provided by residues 186–188 (GSE), lysine 212, and 215–217 (KRS). Residues glutamate 224, lysine 246, and 252 to 255 (HIQR) each bind substrate.

Belongs to the phosphofructokinase type A (PFKA) family. ATP-dependent PFK group I subfamily. Prokaryotic clade 'B1' sub-subfamily. In terms of assembly, homotetramer. Mg(2+) serves as cofactor.

Its subcellular location is the cytoplasm. The catalysed reaction is beta-D-fructose 6-phosphate + ATP = beta-D-fructose 1,6-bisphosphate + ADP + H(+). The protein operates within carbohydrate degradation; glycolysis; D-glyceraldehyde 3-phosphate and glycerone phosphate from D-glucose: step 3/4. Its activity is regulated as follows. Allosterically activated by ADP and other diphosphonucleosides, and allosterically inhibited by phosphoenolpyruvate. Catalyzes the phosphorylation of D-fructose 6-phosphate to fructose 1,6-bisphosphate by ATP, the first committing step of glycolysis. This is ATP-dependent 6-phosphofructokinase from Mycoplasmopsis pulmonis (strain UAB CTIP) (Mycoplasma pulmonis).